The chain runs to 71 residues: Small ribosomal subunit protein bS18c (71 aa).

Belongs to the bacterial ribosomal protein bS18 family. In terms of assembly, part of the 30S ribosomal subunit.

It localises to the plastid. Its subcellular location is the cyanelle. The sequence is that of Small ribosomal subunit protein bS18c (rps18) from Cyanophora paradoxa.